The primary structure comprises 419 residues: Gamma-glutamyl phosphate reductase (419 aa).

It belongs to the gamma-glutamyl phosphate reductase family.

It is found in the cytoplasm. The catalysed reaction is L-glutamate 5-semialdehyde + phosphate + NADP(+) = L-glutamyl 5-phosphate + NADPH + H(+). Its pathway is amino-acid biosynthesis; L-proline biosynthesis; L-glutamate 5-semialdehyde from L-glutamate: step 2/2. Functionally, catalyzes the NADPH-dependent reduction of L-glutamate 5-phosphate into L-glutamate 5-semialdehyde and phosphate. The product spontaneously undergoes cyclization to form 1-pyrroline-5-carboxylate. The sequence is that of Gamma-glutamyl phosphate reductase from Bordetella parapertussis (strain 12822 / ATCC BAA-587 / NCTC 13253).